The primary structure comprises 289 residues: Cell division protein ZipA (289 aa).

A topological domain (periplasmic) is located at residue Met-1. A helical membrane pass occupies residues 2 to 22 (DIGLREWLIVIGLIVIAGILF). Residues 23 to 289 (DGWRRMRGGK…HERRSLMQKR (267 aa)) lie on the Cytoplasmic side of the membrane. The interval 65–141 (HREPSFDEQD…KEREKAPAVA (77 aa)) is disordered. Residues 81 to 99 (RETKERKGGKRQEEPRQGD) show a composition bias toward basic and acidic residues. The segment covering 100–114 (LDLDEGLALEADPSD) has biased composition (acidic residues).

The protein belongs to the ZipA family. Interacts with FtsZ via their C-terminal domains.

Its subcellular location is the cell inner membrane. Its function is as follows. Essential cell division protein that stabilizes the FtsZ protofilaments by cross-linking them and that serves as a cytoplasmic membrane anchor for the Z ring. Also required for the recruitment to the septal ring of downstream cell division proteins. The protein is Cell division protein ZipA of Pseudomonas aeruginosa (strain UCBPP-PA14).